The following is a 247-amino-acid chain: Osmotin-like protein NP24-I (247 aa).

The N-terminal stretch at 1–21 (MGYLTSSFVLFFLLCVTYTYA) is a signal peptide. 8 disulfides stabilise this stretch: cysteine 30–cysteine 225, cysteine 72–cysteine 82, cysteine 87–cysteine 93, cysteine 141–cysteine 213, cysteine 146–cysteine 196, cysteine 154–cysteine 164, cysteine 168–cysteine 177, and cysteine 178–cysteine 183.

This sequence belongs to the thaumatin family. As to expression, highest levels of both isoforms found in the outer pericarp, with smaller amounts in the inner pericarp.

It is found in the cytoplasm. The protein localises to the vacuole. It catalyses the reaction Endohydrolysis of (1-&gt;3)- or (1-&gt;4)-linkages in beta-D-glucans when the glucose residue whose reducing group is involved in the linkage to be hydrolyzed is itself substituted at C-3.. Functionally, has antifungal activity against P.betae and F.dahliae. May be involved in disease resistance in tomatoes and/or have a possible role in fruit development and ripening. Binds to beta-glucans and exhibits beta-1,3-D-glucanase activity. In Solanum lycopersicum (Tomato), this protein is Osmotin-like protein NP24-I.